The primary structure comprises 257 residues: Uracil phosphoribosyltransferase (257 aa).

Residues R77, R102, and 129-137 each bind 5-phospho-alpha-D-ribose 1-diphosphate; that span reads DPMLATGGS. Residues I192 and 197–199 each bind uracil; that span reads GDA. D198 contacts 5-phospho-alpha-D-ribose 1-diphosphate. Positions 203–257 are disordered; the sequence is QFGPNLFTSSAPSRPEAPAGRGRAAAKTPGRRSARSESPSSTSPSARSRKAAPPA. Low complexity-rich tracts occupy residues 211–230 and 238–248; these read SSAP…AAKT and SESPSSTSPSA.

The protein belongs to the UPRTase family. It depends on Mg(2+) as a cofactor.

The catalysed reaction is UMP + diphosphate = 5-phospho-alpha-D-ribose 1-diphosphate + uracil. The protein operates within pyrimidine metabolism; UMP biosynthesis via salvage pathway; UMP from uracil: step 1/1. With respect to regulation, allosterically activated by GTP. Functionally, catalyzes the conversion of uracil and 5-phospho-alpha-D-ribose 1-diphosphate (PRPP) to UMP and diphosphate. The sequence is that of Uracil phosphoribosyltransferase from Mycolicibacterium paratuberculosis (strain ATCC BAA-968 / K-10) (Mycobacterium paratuberculosis).